We begin with the raw amino-acid sequence, 442 residues long: ATP-dependent protease ATPase subunit HslU (442 aa).

Residues I18, 60–65, D255, E320, and R392 each bind ATP; that span reads GVGKTE.

Belongs to the ClpX chaperone family. HslU subfamily. A double ring-shaped homohexamer of HslV is capped on each side by a ring-shaped HslU homohexamer. The assembly of the HslU/HslV complex is dependent on binding of ATP.

It is found in the cytoplasm. Its function is as follows. ATPase subunit of a proteasome-like degradation complex; this subunit has chaperone activity. The binding of ATP and its subsequent hydrolysis by HslU are essential for unfolding of protein substrates subsequently hydrolyzed by HslV. HslU recognizes the N-terminal part of its protein substrates and unfolds these before they are guided to HslV for hydrolysis. The chain is ATP-dependent protease ATPase subunit HslU from Aeromonas hydrophila subsp. hydrophila (strain ATCC 7966 / DSM 30187 / BCRC 13018 / CCUG 14551 / JCM 1027 / KCTC 2358 / NCIMB 9240 / NCTC 8049).